A 273-amino-acid polypeptide reads, in one-letter code: Bifunctional protein FolD (273 aa).

Residues 152-154 (GRS), T179, and I220 contribute to the NADP(+) site.

It belongs to the tetrahydrofolate dehydrogenase/cyclohydrolase family. Homodimer.

It carries out the reaction (6R)-5,10-methylene-5,6,7,8-tetrahydrofolate + NADP(+) = (6R)-5,10-methenyltetrahydrofolate + NADPH. The catalysed reaction is (6R)-5,10-methenyltetrahydrofolate + H2O = (6R)-10-formyltetrahydrofolate + H(+). It functions in the pathway one-carbon metabolism; tetrahydrofolate interconversion. In terms of biological role, catalyzes the oxidation of 5,10-methylenetetrahydrofolate to 5,10-methenyltetrahydrofolate and then the hydrolysis of 5,10-methenyltetrahydrofolate to 10-formyltetrahydrofolate. The sequence is that of Bifunctional protein FolD from Petrotoga mobilis (strain DSM 10674 / SJ95).